The following is a 148-amino-acid chain: Large ribosomal subunit protein bL9 (148 aa).

The protein belongs to the bacterial ribosomal protein bL9 family.

Binds to the 23S rRNA. This Methylobacillus flagellatus (strain ATCC 51484 / DSM 6875 / VKM B-1610 / KT) protein is Large ribosomal subunit protein bL9.